A 306-amino-acid polypeptide reads, in one-letter code: Follistatin-related protein 1 (306 aa).

An N-terminal signal peptide occupies residues 1–18 (MWKRWLALALVAVAWVRA). One can recognise a Follistatin-like domain in the interval 28–51 (ICANVFCGAGRECAVTEKGEPTCL). Intrachain disulfides connect Cys-29–Cys-40, Cys-34–Cys-50, Cys-52–Cys-82, Cys-56–Cys-75, and Cys-64–Cys-96. The Kazal-like domain maps to 46–98 (GEPTCLCIEQCKPHKRPVCGSNGKTYLNHCELHRDACLTGSKIQVDYDGHCKE). N-linked (GlcNAc...) asparagine glycosylation occurs at Asn-142. Positions 142 to 176 (NYSEILDKYFKNFDNGDSRLDSSEFLKFVEQNETA) constitute an EF-hand 1 domain. Phosphoserine is present on Ser-163. Asn-173 and Asn-178 each carry an N-linked (GlcNAc...) asparagine glycan. Residues 191–226 (LRGLCVDALIELSDENADWKLSFQEFLKCLNPSFNP) form the EF-hand 2 domain. In terms of domain architecture, VWFC spans 231–285 (CALEDETYADGAETEVDCNRCVCACGNWVCTAMTCDGKNQKGAQTQTEEEMTRYV).

In terms of assembly, homodimer. Interacts with SCN10A. Interacts with DIP2A; DIP2A may act as a cell surface receptor for FSTL1. Interacts with BMP4. Interacts with CD14; this interaction promotes TL4-mediated signaling cascade.

The protein localises to the secreted. Functionally, secreted glycoprotein that is involved in various physiological processes, such as angiogenesis, regulation of the immune response, cell proliferation and differentiation. Plays a role in the development of the central nervous system, skeletal system, lungs, and ureter. Promotes endothelial cell survival, migration and differentiation into network structures in an AKT-dependent manner. Also promotes survival of cardiac myocytes. Initiates various signaling cascades by activating different receptors on the cell surface such as DIP2A, TLR4 or BMP receptors. This chain is Follistatin-related protein 1 (FSTL1), found in Pongo abelii (Sumatran orangutan).